A 604-amino-acid polypeptide reads, in one-letter code: MADISDQNIPGHVTTGPIRGSRKIYVEGKNGVRVAMREIDLEPSANEQPVRVYDCSGPYTDPNIKIDIAAGLKPLRREWILARGDVESYEGREIKPEDNGQLGPDRSGGVPPFPNVNHHPLRAKAGANVTQMHYAKKGIVTSEMEYIAIRENCGRAQMKEAMIRDGESFGANIPDFITPEFVRDEIAEGRAVIAANINHPEAEPMIIGRNFLVKINANIGNSAVASDVAAEVEKMVWAIRWGADTVMDLSTGRNIHDTREWILRNSPVPIGTVPIYQALEKVNGIAENLTWEVFRDTLIEQAEQGVDYFTIHAGVRLAYIPLTANRITGIVSRGGSIMAKWCLAHHQENFLYTHFEDICEILKRYDIAFSLGDGLRPGCIADANDRAQFAELETLGELTKIAWKHDVQVMIEGPGHVPMHKIKPNMDKELVACHEAPFYTLGPLTTDIAPGYDHITSAIGAAMIGWYGTAMLCYVTPKEHLGLPDRDDVKVGVVTYKLAAHAADLAKGHPTAHFRDNALSRARFEFRWKDQFNLSLDPDTAESFHDQTLPAEGAKAAHFCSMCGPKFCSMKITQEVREFAAQGMEEMSDQFKEKGGEIYLPAAE.

Substrate is bound by residues Asn218, Met247, Tyr276, His312, 332-334 (SRG), 373-376 (DGLR), and Glu412. Position 416 (His416) interacts with Zn(2+). Tyr439 contributes to the substrate binding site. Zn(2+) is bound at residue His480. The [4Fe-4S] cluster site is built by Cys560, Cys563, and Cys568.

It belongs to the ThiC family. In terms of assembly, homodimer. [4Fe-4S] cluster is required as a cofactor.

It carries out the reaction 5-amino-1-(5-phospho-beta-D-ribosyl)imidazole + S-adenosyl-L-methionine = 4-amino-2-methyl-5-(phosphooxymethyl)pyrimidine + CO + 5'-deoxyadenosine + formate + L-methionine + 3 H(+). It participates in cofactor biosynthesis; thiamine diphosphate biosynthesis. Its function is as follows. Catalyzes the synthesis of the hydroxymethylpyrimidine phosphate (HMP-P) moiety of thiamine from aminoimidazole ribotide (AIR) in a radical S-adenosyl-L-methionine (SAM)-dependent reaction. The polypeptide is Phosphomethylpyrimidine synthase (Zymomonas mobilis subsp. mobilis (strain ATCC 31821 / ZM4 / CP4)).